The chain runs to 89 residues: Small ribosomal subunit protein uS19 (89 aa).

The protein belongs to the universal ribosomal protein uS19 family.

Its function is as follows. Protein S19 forms a complex with S13 that binds strongly to the 16S ribosomal RNA. In Xylella fastidiosa (strain 9a5c), this protein is Small ribosomal subunit protein uS19.